Consider the following 205-residue polypeptide: Regulator of G-protein signaling 4 (205 aa).

Residues Cys2, Cys12, and Cys95 are each lipidated (S-palmitoyl cysteine). The RGS domain maps to 62–178 (SLENLINHEC…LKSRFYLDLT (117 aa)).

In terms of processing, either Cys-2 or Cys-12 or both are palmitoylated. Phosphorylated by cyclic GMP-dependent protein kinase.

In terms of biological role, inhibits signal transduction by increasing the GTPase activity of G protein alpha subunits thereby driving them into their inactive GDP-bound form. Activity on G(z)-alpha is inhibited by phosphorylation of the G-protein. Activity on G(z)-alpha and G(i)-alpha-1 is inhibited by palmitoylation of the G-protein. In Rattus norvegicus (Rat), this protein is Regulator of G-protein signaling 4 (Rgs4).